Consider the following 346-residue polypeptide: Sensor protein kinase GraS (346 aa).

Helical transmembrane passes span 15–35 (MNWI…SLID) and 43–63 (LFYI…LTYF). In terms of domain architecture, Histidine kinase spans 126–332 (EFVHDIKTPV…TVRLIFPLQN (207 aa)).

In terms of assembly, interacts with GraX.

The protein resides in the cell membrane. The catalysed reaction is ATP + protein L-histidine = ADP + protein N-phospho-L-histidine.. Its function is as follows. Member of the two-component regulatory system GraR/GraS involved in resistance against cationic antimicrobial peptides (CAMPs). Functions as a sensor protein kinase which phosphorylates GraR through the auxiliary protein GraX. In turn, GraR up-regulates many genes such as adhesins, exoproteins, transporters, toxins, and proteins involved in cell wall synthesis. Down-regulates the expression of many genes involved in RNA and amino acid synthesis or glycolysis. The polypeptide is Sensor protein kinase GraS (graS) (Staphylococcus aureus (strain MSSA476)).